Reading from the N-terminus, the 175-residue chain is MMAYIGFILSIMFVISFVGFSSKPSPIYGGLVLIMSGGFGCGIVMSFGGSFLGLMVFLIYLGGMLVVFGYTTAMATEQYPEVWVSSAAVLGAFVLGVLMEVVLVLYVYKNGEVEVVFNFSGVGDWAVSDNGGFGVFSEEIVGVSALYSYGVWIIIVTGWSLFVGVLVILEITRGA.

6 consecutive transmembrane segments (helical) span residues 1 to 21 (MMAYIGFILSIMFVISFVGFS), 25 to 45 (SPIYGGLVLIMSGGFGCGIVM), 47 to 67 (FGGSFLGLMVFLIYLGGMLVV), 87 to 107 (AAVLGAFVLGVLMEVVLVLYV), 116 to 136 (VFNFSGVGDWAVSDNGGFGVF), and 149 to 169 (YGVWIIIVTGWSLFVGVLVIL).

Belongs to the complex I subunit 6 family. In terms of assembly, core subunit of respiratory chain NADH dehydrogenase (Complex I) which is composed of 45 different subunits.

It is found in the mitochondrion inner membrane. It carries out the reaction a ubiquinone + NADH + 5 H(+)(in) = a ubiquinol + NAD(+) + 4 H(+)(out). Functionally, core subunit of the mitochondrial membrane respiratory chain NADH dehydrogenase (Complex I) which catalyzes electron transfer from NADH through the respiratory chain, using ubiquinone as an electron acceptor. Essential for the catalytic activity and assembly of complex I. The polypeptide is NADH-ubiquinone oxidoreductase chain 6 (MT-ND6) (Ceratotherium simum (White rhinoceros)).